A 332-amino-acid polypeptide reads, in one-letter code: UPF0194 membrane protein YbhG (332 aa).

Positions 1-16 are cleaved as a signal peptide; that stretch reads MMKKPVVIGLAVVVLA. Residues 108 to 209 are a coiled coil; that stretch reads EEIAQAAAAV…LNLQDSTLIA (102 aa).

Belongs to the UPF0194 family.

The protein localises to the periplasm. This is UPF0194 membrane protein YbhG from Escherichia coli O45:K1 (strain S88 / ExPEC).